A 511-amino-acid chain; its full sequence is DEP domain-containing protein 7 (511 aa).

One can recognise a DEP domain in the interval 46 to 136 (LQTQVEVKKR…SSCSLYRFTT (91 aa)).

The protein belongs to the DEPDC7 family. As to expression, expressed in liver.

In Homo sapiens (Human), this protein is DEP domain-containing protein 7 (DEPDC7).